Reading from the N-terminus, the 363-residue chain is Sensor protein BasS (363 aa).

Topologically, residues 1–13 are cytoplasmic; the sequence is MHFLRRPISLRQR. A helical membrane pass occupies residues 14 to 34; sequence LILTIGAILLVFELISVFWLW. At 35–64 the chain is on the periplasmic side; that stretch reads HESTEQIQLFEQALRDNRNNDRHIMREIRE. Residues 65-88 traverse the membrane as a helical segment; sequence AVASLIVPGVFMVSLTLFICYQAV. The 53-residue stretch at 89–141 folds into the HAMP domain; it reads RRITRPLAELQKELEARTADNLTPIAIHSATLEIEAVVSALNDLVSRLTSTLD. Over 89 to 363 the chain is Cytoplasmic; the sequence is RRITRPLAEL…KKDQYVANQI (275 aa). Residues 149-357 enclose the Histidine kinase domain; the sequence is DVAHELRTPL…RAWVRLKKDQ (209 aa). Phosphohistidine; by autocatalysis is present on histidine 152.

Autophosphorylated.

Its subcellular location is the cell inner membrane. The enzyme catalyses ATP + protein L-histidine = ADP + protein N-phospho-L-histidine.. Member of the two-component regulatory system BasS/BasR Autophosphorylates and activates BasR by phosphorylation. This chain is Sensor protein BasS (basS), found in Escherichia coli (strain K12).